Consider the following 408-residue polypeptide: Acetylornithine aminotransferase (408 aa).

Pyridoxal 5'-phosphate contacts are provided by residues 107 to 108 (GT) and Phe-141. Arg-144 is a binding site for N(2)-acetyl-L-ornithine. 227–230 (DEIQ) serves as a coordination point for pyridoxal 5'-phosphate. The residue at position 256 (Lys-256) is an N6-(pyridoxal phosphate)lysine. Thr-284 contributes to the N(2)-acetyl-L-ornithine binding site. A pyridoxal 5'-phosphate-binding site is contributed by Thr-285.

Belongs to the class-III pyridoxal-phosphate-dependent aminotransferase family. ArgD subfamily. Homodimer. Requires pyridoxal 5'-phosphate as cofactor.

Its subcellular location is the cytoplasm. The catalysed reaction is N(2)-acetyl-L-ornithine + 2-oxoglutarate = N-acetyl-L-glutamate 5-semialdehyde + L-glutamate. It participates in amino-acid biosynthesis; L-arginine biosynthesis; N(2)-acetyl-L-ornithine from L-glutamate: step 4/4. The chain is Acetylornithine aminotransferase from Xanthomonas axonopodis pv. citri (strain 306).